Consider the following 315-residue polypeptide: Homoserine kinase (315 aa).

Residue 97-107 coordinates ATP; the sequence is PPARGLGSSAT.

It belongs to the GHMP kinase family. Homoserine kinase subfamily.

The protein localises to the cytoplasm. The catalysed reaction is L-homoserine + ATP = O-phospho-L-homoserine + ADP + H(+). Its pathway is amino-acid biosynthesis; L-threonine biosynthesis; L-threonine from L-aspartate: step 4/5. In terms of biological role, catalyzes the ATP-dependent phosphorylation of L-homoserine to L-homoserine phosphate. The polypeptide is Homoserine kinase (Prochlorococcus marinus (strain NATL1A)).